A 456-amino-acid polypeptide reads, in one-letter code: Histidine--tRNA ligase (456 aa).

The segment covering 1–11 (MTQNENPSAQS) has biased composition (polar residues). The disordered stretch occupies residues 1-22 (MTQNENPSAQSGAKPEDKARPA).

It belongs to the class-II aminoacyl-tRNA synthetase family. In terms of assembly, homodimer.

The protein resides in the cytoplasm. The enzyme catalyses tRNA(His) + L-histidine + ATP = L-histidyl-tRNA(His) + AMP + diphosphate + H(+). This is Histidine--tRNA ligase from Cupriavidus pinatubonensis (strain JMP 134 / LMG 1197) (Cupriavidus necator (strain JMP 134)).